Consider the following 277-residue polypeptide: Membrane protein insertase YidC 2 (277 aa).

A signal peptide spans Met1–Gly22. The N-palmitoyl cysteine moiety is linked to residue Cys23. A lipid anchor (S-diacylglycerol cysteine) is attached at Cys23. 5 consecutive transmembrane segments (helical) span residues Phe35–Phe55, Gly60–Phe80, Ala130–Trp150, Pro170–Met190, and Pro208–Ile228. A compositionally biased stretch (basic and acidic residues) spans Glu251–Lys266. The segment at Glu251 to Arg277 is disordered. Basic residues predominate over residues Ala267 to Arg277.

This sequence belongs to the OXA1/ALB3/YidC family. Type 2 subfamily.

The protein resides in the cell membrane. Functionally, required for the insertion and/or proper folding and/or complex formation of integral membrane proteins into the membrane. Involved in integration of membrane proteins that insert both dependently and independently of the Sec translocase complex, as well as at least some lipoproteins. This is Membrane protein insertase YidC 2 from Lactiplantibacillus plantarum (strain ATCC BAA-793 / NCIMB 8826 / WCFS1) (Lactobacillus plantarum).